The chain runs to 452 residues: Transcription factor AP-2-delta (452 aa).

Residue serine 239 is modified to Phosphoserine; by PKA. The H-S-H (helix-span-helix), dimerization stretch occupies residues 280 to 410; the sequence is RRKAANVTLL…VLSEMLNYLE (131 aa). A disordered region spans residues 416–452; the sequence is KNGGAADSGQGHANSEKAPLRKTSEAAVKEGKTEKTD. Basic and acidic residues predominate over residues 429-452; it reads NSEKAPLRKTSEAAVKEGKTEKTD.

The protein belongs to the AP-2 family. In terms of assembly, binds DNA as a dimer. Can form homodimers or heterodimers with other AP-2 family members. Highly expressed in brain, placenta, skeletal muscle, thymus, small intestine, and prostate, and expressed at lower levels in leukocyte, spleen, testis, ovary and colon. Barely detectable in heart, kidney, liver, lung or pancreas.

The protein resides in the nucleus. In terms of biological role, sequence-specific DNA-binding protein that interacts with inducible viral and cellular enhancer elements to regulate transcription of selected genes. AP-2 factors bind to the consensus sequence 5'-GCCNNNGGC-3' and activate genes involved in a large spectrum of important biological functions including proper eye, face, body wall, limb and neural tube development. They also suppress a number of genes including MCAM/MUC18, C/EBP alpha and MYC. The chain is Transcription factor AP-2-delta from Homo sapiens (Human).